The chain runs to 256 residues: Membrane-anchored junction protein (256 aa).

At 1-232 the chain is on the nuclear side; it reads MSLKPFTYPF…HSSPPPPKEP (232 aa). 2 disordered regions span residues 143 to 197 and 211 to 235; these read KRKL…TPAS and HGLQ…PGAR. Positions 164–173 are enriched in polar residues; the sequence is ETSSEASSNK. The span at 175 to 184 shows a compositional bias: basic and acidic residues; the sequence is PLKESKRSTD. Residues 233–251 traverse the membrane as a helical segment; the sequence is GARGFLGFLSALFPFRYFF. Topologically, residues 252–256 are perinuclear space; it reads KKSGQ.

The protein belongs to the MAJIN family. As to quaternary structure, component of the MAJIN-TERB1-TERB2 complex, composed of MAJIN, TERB1 and TERB2. Specifically expressed in germline tissues.

The protein localises to the nucleus inner membrane. The protein resides in the chromosome. Its subcellular location is the telomere. Its function is as follows. Meiosis-specific telomere-associated protein involved in meiotic telomere attachment to the nucleus inner membrane, a crucial step for homologous pairing and synapsis. Component of the MAJIN-TERB1-TERB2 complex, which promotes telomere cap exchange by mediating attachment of telomeric DNA to the inner nuclear membrane and replacement of the protective cap of telomeric chromosomes: in early meiosis, the MAJIN-TERB1-TERB2 complex associates with telomeric DNA and the shelterin/telosome complex. During prophase, the complex matures and promotes release of the shelterin/telosome complex from telomeric DNA. In the complex, MAJIN acts as the anchoring subunit to the nucleus inner membrane. MAJIN shows DNA-binding activity, possibly for the stabilization of telomere attachment on the nucleus inner membrane. This Mus musculus (Mouse) protein is Membrane-anchored junction protein.